The sequence spans 267 residues: Taurine import ATP-binding protein TauB (267 aa).

The ABC transporter domain maps to 6 to 238; sequence FNEASLIYPA…DILAGAPASE (233 aa). 43–50 lines the ATP pocket; the sequence is GRSGSGKT.

This sequence belongs to the ABC transporter superfamily. Taurine importer (TC 3.A.1.17.1) family. The complex is composed of two ATP-binding proteins (TauB), two transmembrane proteins (TauC) and a solute-binding protein (TauA).

It is found in the cell inner membrane. It catalyses the reaction taurine(out) + ATP + H2O = taurine(in) + ADP + phosphate + H(+). In terms of biological role, part of the ABC transporter complex TauABC involved in taurine import. Responsible for energy coupling to the transport system. The chain is Taurine import ATP-binding protein TauB from Sinorhizobium fredii (strain NBRC 101917 / NGR234).